The sequence spans 244 residues: 1-(5-phosphoribosyl)-5-[(5-phosphoribosylamino)methylideneamino] imidazole-4-carboxamide isomerase (244 aa).

Catalysis depends on aspartate 10, which acts as the Proton acceptor. Residue aspartate 129 is the Proton donor of the active site.

This sequence belongs to the HisA/HisF family.

The protein localises to the cytoplasm. It carries out the reaction 1-(5-phospho-beta-D-ribosyl)-5-[(5-phospho-beta-D-ribosylamino)methylideneamino]imidazole-4-carboxamide = 5-[(5-phospho-1-deoxy-D-ribulos-1-ylimino)methylamino]-1-(5-phospho-beta-D-ribosyl)imidazole-4-carboxamide. Its pathway is amino-acid biosynthesis; L-histidine biosynthesis; L-histidine from 5-phospho-alpha-D-ribose 1-diphosphate: step 4/9. This chain is 1-(5-phosphoribosyl)-5-[(5-phosphoribosylamino)methylideneamino] imidazole-4-carboxamide isomerase, found in Rhodococcus opacus (strain B4).